We begin with the raw amino-acid sequence, 267 residues long: Orotidine 5'-phosphate decarboxylase (267 aa).

Position 2 is an N-acetylserine (serine 2). Substrate is bound by residues aspartate 37, 59-61, and 91-100; these read KTH and DRKFADIGNT. The Proton donor role is filled by lysine 93. Residues lysine 93 and lysine 209 each participate in a glycyl lysine isopeptide (Lys-Gly) (interchain with G-Cter in ubiquitin) cross-link. Residues tyrosine 217 and arginine 235 each contribute to the substrate site. A Glycyl lysine isopeptide (Lys-Gly) (interchain with G-Cter in ubiquitin) cross-link involves residue lysine 253.

The protein belongs to the OMP decarboxylase family.

The catalysed reaction is orotidine 5'-phosphate + H(+) = UMP + CO2. The protein operates within pyrimidine metabolism; UMP biosynthesis via de novo pathway; UMP from orotate: step 2/2. This Saccharomyces cerevisiae (strain ATCC 204508 / S288c) (Baker's yeast) protein is Orotidine 5'-phosphate decarboxylase (URA3).